Reading from the N-terminus, the 301-residue chain is tRNA uridine(34) hydroxylase (301 aa).

A Rhodanese domain is found at 121-212 (NDKDTLVLDS…YLKNIKKKES (92 aa)). Catalysis depends on cysteine 172, which acts as the Cysteine persulfide intermediate.

This sequence belongs to the TrhO family.

The enzyme catalyses uridine(34) in tRNA + AH2 + O2 = 5-hydroxyuridine(34) in tRNA + A + H2O. Catalyzes oxygen-dependent 5-hydroxyuridine (ho5U) modification at position 34 in tRNAs. This chain is tRNA uridine(34) hydroxylase, found in Pelagibacter ubique (strain HTCC1062).